Reading from the N-terminus, the 190-residue chain is dCTP deaminase (190 aa).

Position 113–118 (113–118 (KSTYAR)) interacts with dCTP. Catalysis depends on glutamate 139, which acts as the Proton donor/acceptor. 4 residues coordinate dCTP: glutamine 158, tyrosine 172, lysine 181, and glutamine 182.

Belongs to the dCTP deaminase family. Homotrimer.

It catalyses the reaction dCTP + H2O + H(+) = dUTP + NH4(+). It functions in the pathway pyrimidine metabolism; dUMP biosynthesis; dUMP from dCTP (dUTP route): step 1/2. Catalyzes the deamination of dCTP to dUTP. The polypeptide is dCTP deaminase (Chlamydia caviae (strain ATCC VR-813 / DSM 19441 / 03DC25 / GPIC) (Chlamydophila caviae)).